The chain runs to 410 residues: NADH-quinone oxidoreductase subunit D (410 aa).

It belongs to the complex I 49 kDa subunit family. In terms of assembly, NDH-1 is composed of 14 different subunits. Subunits NuoB, C, D, E, F, and G constitute the peripheral sector of the complex.

Its subcellular location is the cell inner membrane. The catalysed reaction is a quinone + NADH + 5 H(+)(in) = a quinol + NAD(+) + 4 H(+)(out). Its function is as follows. NDH-1 shuttles electrons from NADH, via FMN and iron-sulfur (Fe-S) centers, to quinones in the respiratory chain. The immediate electron acceptor for the enzyme in this species is believed to be ubiquinone. Couples the redox reaction to proton translocation (for every two electrons transferred, four hydrogen ions are translocated across the cytoplasmic membrane), and thus conserves the redox energy in a proton gradient. The chain is NADH-quinone oxidoreductase subunit D from Nitratiruptor sp. (strain SB155-2).